The primary structure comprises 397 residues: Erythromycin C-12 hydroxylase (397 aa).

74 to 75 provides a ligand contact to substrate; that stretch reads HE. Heme contacts are provided by His81 and Arg85. Position 278 (Gln278) interacts with substrate. A heme-binding site is contributed by Arg279. Residues 307–322 show a composition bias toward basic and acidic residues; the sequence is RDSDAHDDPDRFDPSR. The disordered stretch occupies residues 307–326; that stretch reads RDSDAHDDPDRFDPSRKSGG. Heme contacts are provided by His337 and Cys339.

Belongs to the cytochrome P450 family. Monomer. Heme b is required as a cofactor.

It carries out the reaction erythromycin D + NADPH + O2 + H(+) = erythromycin C + NADP(+) + H2O. Its pathway is antibiotic biosynthesis; erythromycin biosynthesis. Functionally, responsible for the C-12 hydroxylation of the macrolactone ring of erythromycin. Thus, EryK catalyzes the hydroxylation of erythromycin D (ErD) at the C-12 position to produce erythromycin C (ErC). Erythromycin B (ErB) is not a substrate for this enzyme. In Saccharopolyspora erythraea (strain ATCC 11635 / DSM 40517 / JCM 4748 / NBRC 13426 / NCIMB 8594 / NRRL 2338), this protein is Erythromycin C-12 hydroxylase (eryK).